The following is a 119-amino-acid chain: Large ribosomal subunit protein uL14 (119 aa).

The protein belongs to the universal ribosomal protein uL14 family. As to quaternary structure, part of the 50S ribosomal subunit. Forms a cluster with proteins L3 and L19. In the 70S ribosome, L14 and L19 interact and together make contacts with the 16S rRNA in bridges B5 and B8.

Functionally, binds to 23S rRNA. Forms part of two intersubunit bridges in the 70S ribosome. This is Large ribosomal subunit protein uL14 from Wolbachia sp. subsp. Brugia malayi (strain TRS).